A 482-amino-acid polypeptide reads, in one-letter code: PHD finger protein At3g20280 (482 aa).

The PHD-type zinc-finger motif lies at 45 to 97 (AMACQICEVTINEMDTLLICDACEKAYHLKCLQGNNMKGVPKSEWHCSRCVQA). 2 disordered regions span residues 188-210 (TNIG…APVS) and 314-482 (SSNS…ENAA). The segment covering 314–324 (SSNSQQAVSHS) has biased composition (low complexity). Polar residues-rich tracts occupy residues 377 to 386 (ACQNHPTASP) and 393 to 428 (QDST…NYDS). Over residues 447–482 (DSEKGKGLNGLDDRHQEQPSEPEFYKSDSVKEENAA) the composition is skewed to basic and acidic residues.

This is PHD finger protein At3g20280 from Arabidopsis thaliana (Mouse-ear cress).